Consider the following 359-residue polypeptide: 4-hydroxy-tetrahydrodipicolinate synthase, chloroplastic (359 aa).

The N-terminal 33 residues, 1 to 33, are a transit peptide targeting the chloroplast; the sequence is MSSSIIGRCHFVADSIEAAGTKRRTTRWRSPRA. Residue Thr102 participates in pyruvate binding. Residue Tyr188 is the Proton donor/acceptor of the active site. Lys216 functions as the Schiff-base intermediate with substrate in the catalytic mechanism. Ile255 serves as a coordination point for pyruvate.

Belongs to the DapA family.

It is found in the plastid. Its subcellular location is the chloroplast. The enzyme catalyses L-aspartate 4-semialdehyde + pyruvate = (2S,4S)-4-hydroxy-2,3,4,5-tetrahydrodipicolinate + H2O + H(+). Its pathway is amino-acid biosynthesis; L-lysine biosynthesis via DAP pathway; (S)-tetrahydrodipicolinate from L-aspartate: step 3/4. Catalyzes the condensation of (S)-aspartate-beta-semialdehyde [(S)-ASA] and pyruvate to 4-hydroxy-tetrahydrodipicolinate (HTPA). The sequence is that of 4-hydroxy-tetrahydrodipicolinate synthase, chloroplastic (DHPS1) from Nicotiana tabacum (Common tobacco).